Here is a 306-residue protein sequence, read N- to C-terminus: Histone-lysine N-methyltransferase SETMAR (306 aa).

The 64-residue stretch at 60 to 123 (PGCACLKTPC…RCRNRVVQWG (64 aa)) folds into the Pre-SET domain. Zn(2+)-binding residues include Cys-62, Cys-64, Cys-69, Cys-74, Cys-76, Cys-105, Cys-109, Cys-111, and Cys-115. Residues 126–250 (FHLQVFKTDH…PEEELSYDYS (125 aa)) form the SET domain. Residues 136 to 138 (KGW), Tyr-179, Arg-207, and 210 to 211 (NH) contribute to the S-adenosyl-L-methionine site. Zn(2+) is bound by residues Cys-213, Cys-274, Cys-276, and Cys-281. The Post-SET domain occupies 270 to 286 (LRKPCYCGARSCAAFLP).

Belongs to the class V-like SAM-binding methyltransferase superfamily.

Its subcellular location is the nucleus. The protein localises to the chromosome. It carries out the reaction L-lysyl(36)-[histone H3] + 2 S-adenosyl-L-methionine = N(6),N(6)-dimethyl-L-lysyl(36)-[histone H3] + 2 S-adenosyl-L-homocysteine + 2 H(+). In terms of biological role, histone methyltransferase that methylates 'Lys-4' and 'Lys-36' of histone H3, 2 specific tags for epigenetic transcriptional activation. Specifically mediates dimethylation of H3 'Lys-36'. The protein is Histone-lysine N-methyltransferase SETMAR of Bos taurus (Bovine).